A 146-amino-acid chain; its full sequence is Neutral phospholipase A2 B (146 aa).

The signal sequence occupies residues 1–21 (MNPAHLLILAAVCVSPLGASS). The propeptide occupies 22–27 (NRPMPL). 7 disulfides stabilise this stretch: C38-C98, C53-C145, C55-C71, C70-C126, C77-C119, C87-C112, and C105-C117. Y54, G56, and G58 together coordinate Ca(2+). The active site involves H74. D75 provides a ligand contact to Ca(2+). D120 is an active-site residue.

This sequence belongs to the phospholipase A2 family. Group I subfamily. D49 sub-subfamily. Ca(2+) serves as cofactor. As to expression, expressed by the venom gland.

The protein resides in the secreted. The catalysed reaction is a 1,2-diacyl-sn-glycero-3-phosphocholine + H2O = a 1-acyl-sn-glycero-3-phosphocholine + a fatty acid + H(+). Its function is as follows. PLA2 catalyzes the calcium-dependent hydrolysis of the 2-acyl groups in 3-sn-phosphoglycerides. This Naja sputatrix (Malayan spitting cobra) protein is Neutral phospholipase A2 B.